The following is a 363-amino-acid chain: Aminomethyltransferase (363 aa).

Belongs to the GcvT family. As to quaternary structure, the glycine cleavage system is composed of four proteins: P, T, L and H.

It carries out the reaction N(6)-[(R)-S(8)-aminomethyldihydrolipoyl]-L-lysyl-[protein] + (6S)-5,6,7,8-tetrahydrofolate = N(6)-[(R)-dihydrolipoyl]-L-lysyl-[protein] + (6R)-5,10-methylene-5,6,7,8-tetrahydrofolate + NH4(+). Functionally, the glycine cleavage system catalyzes the degradation of glycine. The sequence is that of Aminomethyltransferase from Staphylococcus aureus (strain bovine RF122 / ET3-1).